The chain runs to 308 residues: Ribosomal RNA large subunit methyltransferase F (308 aa).

Belongs to the methyltransferase superfamily. METTL16/RlmF family.

Its subcellular location is the cytoplasm. It carries out the reaction adenosine(1618) in 23S rRNA + S-adenosyl-L-methionine = N(6)-methyladenosine(1618) in 23S rRNA + S-adenosyl-L-homocysteine + H(+). Its function is as follows. Specifically methylates the adenine in position 1618 of 23S rRNA. The polypeptide is Ribosomal RNA large subunit methyltransferase F (Shigella flexneri serotype 5b (strain 8401)).